The primary structure comprises 147 residues: Large ribosomal subunit protein bL9 (147 aa).

Belongs to the bacterial ribosomal protein bL9 family.

Functionally, binds to the 23S rRNA. This is Large ribosomal subunit protein bL9 from Mesoplasma florum (strain ATCC 33453 / NBRC 100688 / NCTC 11704 / L1) (Acholeplasma florum).